The sequence spans 861 residues: Benzylsuccinate synthase alpha subunit (861 aa).

The PFL domain occupies 40–712; it reads TERTRRLKAR…QAVGLYMEVG (673 aa). The disordered stretch occupies residues 718-744; it reads TPDGRFGGEAADDGGISPYSGTDKKGP. The region spanning 731–850 is the Glycine radical domain; the sequence is GGISPYSGTD…IIARNEQNFN (120 aa). Position 825 is a glycine radical (Gly825).

This sequence belongs to the glycyl radical enzyme (GRE) family. BSS subfamily. As to quaternary structure, heterohexamer composed of 2 alpha subunits, 2 beta subunits and 2 gamma subunits.

The enzyme catalyses toluene + fumarate = 2-benzylsuccinate. It participates in xenobiotic degradation; toluene degradation. Its activity is regulated as follows. Activated by the benzylsuccinate synthase activating enzyme BssD. Rapidly inactivated by oxygen. In terms of biological role, catalyzes the addition of fumarate to the methyl group of toluene, leading to the formation of benzylsuccinate. This chain is Benzylsuccinate synthase alpha subunit (bssA), found in Thauera aromatica.